We begin with the raw amino-acid sequence, 200 residues long: MTEKDAQPQLEEADDDLDSKLNYKPPPQKSLKELQEMDKDDESLTKYKKTLLGDVPVVADPTVPNVTVTRLSLVCDSAPGPITMDLTGDLEALKKDTFVLKEGIEYRVKINFKVNKDIVSGLKYVQHTYRTGMRVDKATFMVGSYGPRPEEYEFLTPVEEAPKGMLARGTYHNKSFFTDDDKQDHLTWEWNLAIKKDWTE.

Positions 1-39 are disordered; that stretch reads MTEKDAQPQLEEADDDLDSKLNYKPPPQKSLKELQEMDK. Thr2 carries the post-translational modification N-acetylthreonine. Residue Lys20 is modified to N6-acetyllysine. Residue Tyr23 is modified to Phosphotyrosine. Lys24, Lys39, Lys46, Lys101, and Lys123 each carry N6-acetyllysine. The span at 30–39 shows a compositional bias: basic and acidic residues; that stretch reads SLKELQEMDK. At Ser144 the chain carries Phosphoserine. N6-acetyllysine is present on Lys174.

The protein belongs to the Rho GDI family. Interacts with RHOA. Interacts with RAC1. Interacts with RAC2. Interacts with CDC42. As to expression, preferentially expressed in hematopoietic cells.

It is found in the cytoplasm. The protein localises to the cytosol. Its function is as follows. Regulates the GDP/GTP exchange reaction of the Rho proteins by inhibiting the dissociation of GDP from them, and the subsequent binding of GTP to them. Regulates reorganization of the actin cytoskeleton mediated by Rho family members. The sequence is that of Rho GDP-dissociation inhibitor 2 (Arhgdib) from Mus musculus (Mouse).